The sequence spans 487 residues: Aspartyl/glutamyl-tRNA(Asn/Gln) amidotransferase subunit B (487 aa).

The protein belongs to the GatB/GatE family. GatB subfamily. Heterotrimer of A, B and C subunits.

The catalysed reaction is L-glutamyl-tRNA(Gln) + L-glutamine + ATP + H2O = L-glutaminyl-tRNA(Gln) + L-glutamate + ADP + phosphate + H(+). The enzyme catalyses L-aspartyl-tRNA(Asn) + L-glutamine + ATP + H2O = L-asparaginyl-tRNA(Asn) + L-glutamate + ADP + phosphate + 2 H(+). In terms of biological role, allows the formation of correctly charged Asn-tRNA(Asn) or Gln-tRNA(Gln) through the transamidation of misacylated Asp-tRNA(Asn) or Glu-tRNA(Gln) in organisms which lack either or both of asparaginyl-tRNA or glutaminyl-tRNA synthetases. The reaction takes place in the presence of glutamine and ATP through an activated phospho-Asp-tRNA(Asn) or phospho-Glu-tRNA(Gln). The polypeptide is Aspartyl/glutamyl-tRNA(Asn/Gln) amidotransferase subunit B (Roseiflexus sp. (strain RS-1)).